The chain runs to 335 residues: MLP-like protein 28 (335 aa).

This sequence belongs to the MLP family.

Its function is as follows. Can bind steroids (in vitro), and may also bind other types of hydrophobic ligands. The polypeptide is MLP-like protein 28 (MLP28) (Arabidopsis thaliana (Mouse-ear cress)).